The primary structure comprises 753 residues: MSAEVSTTPAADNTVNGTPEATNAAATSAPEVTAVESASPSTTPSASQPHSASLYVGELDPSVTEAMLYELFSSIGQVASIRVCRDAVTRRSLGYAYVNYNNTADGERALEDLNYTLIKGKPCRIMWSQRDPALRKTGQGNVFIKNLDAAIDNKALHDTFAAFGNILSCKVAQDEFGNSKGYGFVHYETAEAANNAIKHVNGMLLNDKKVFVGHHISKKDRQSKFEEMKANFTNVYIKNIDQEVTDEEFRKMFEKFGEITSATLSRDQEGKSRGFGFVNFSTHDSAQAAVDEMNDKEIKGQKLYVGRAQKKHEREEELRKQYEAARLEKASKYQGVNLYVKNLTDDVDDEKLRELFSPFGTITSAKVMRDTVTTGETSESEKEKEKESNKENEKEGEEKTEEKPKESEEEPKKTEKKILGKSKGFGFVCFSSPDEASKAVTEMNQRMVNGKPLYVALAQRKDVRRSQLEASIQARNTIRQQQAAAAAGMPQPYMQPAVFYGPGQQGFIPAGQRGGMPFAPQPGMVMGIPGGRPGQYPGPFPGQQGGRGMGPNQQIPPNFQGIPMGAMQGPGGIPNGMGYPQMAQVQFGRGAGGRGQVPGMPMGQGIRGPGYGQGRGGAPVQGGPRPQGGRGQPAAAPPAAGREEVPATGGLTAQTLSAVPPPQQKQMLGEALYPKIQAQQPELAGKITGMLLEMDNNELLGLLEDEEALRAKVDEALSVYDEYMKNKGEGEAPAESAKPKEDAAETATEENKS.

Polar residues predominate over residues 1-26 (MSAEVSTTPAADNTVNGTPEATNAAA). The segment at 1 to 52 (MSAEVSTTPAADNTVNGTPEATNAAATSAPEVTAVESASPSTTPSASQPHSA) is disordered. Low complexity predominate over residues 37–52 (SASPSTTPSASQPHSA). RRM domains lie at 52-130 (ASLY…WSQR), 140-217 (GNVF…HHIS), 233-310 (TNVY…RAQK), and 336-460 (VNLY…LAQR). 2 disordered regions span residues 367–417 (VMRD…TEKK) and 602–645 (MGQG…REEV). Positions 379–417 (ESEKEKEKESNKENEKEGEEKTEEKPKESEEEPKKTEKK) are enriched in basic and acidic residues. Over residues 605 to 631 (GIRGPGYGQGRGGAPVQGGPRPQGGRG) the composition is skewed to gly residues. The 78-residue stretch at 648–725 (TGGLTAQTLS…ALSVYDEYMK (78 aa)) folds into the PABC domain. The interval 728 to 753 (GEGEAPAESAKPKEDAAETATEENKS) is disordered. Over residues 737 to 753 (AKPKEDAAETATEENKS) the composition is skewed to basic and acidic residues.

The protein belongs to the polyadenylate-binding protein type-1 family.

It is found in the cytoplasm. Its subcellular location is the nucleus. In terms of biological role, binds the poly(A) tail of mRNA. Appears to be an important mediator of the multiple roles of the poly(A) tail in mRNA biogenesis, stability and translation. In the nucleus, involved in both mRNA cleavage and polyadenylation. Is also required for efficient mRNA export to the cytoplasm. Acts in concert with a poly(A)-specific nuclease (PAN) to affect poly(A) tail shortening, which may occur concomitantly with either nucleocytoplasmic mRNA transport or translational initiation. In the cytoplasm, stimulates translation initiation and regulates mRNA decay through translation termination-coupled poly(A) shortening, probably mediated by PAN. In Aspergillus fumigatus (strain ATCC MYA-4609 / CBS 101355 / FGSC A1100 / Af293) (Neosartorya fumigata), this protein is Polyadenylate-binding protein, cytoplasmic and nuclear (pab1).